The primary structure comprises 280 residues: MDTIEYTEFSPPLAQRAAGLAQLGCASADGRTRLRRLYQDGSAKIRLPAVLADPLEAVLINTAGGLTGGDRIGWDVDVGTEASASITTQACEKVYRAASDQAEVRVKLTVGENGRIAWLPQETIVFDRAAFARTLDVELAAGAEALVLEATVFGRLAMGERASQGTFRDRWRVRQDGFLIHAEDFRIGPDITGALARPAAAGGVIAVATLLLVSPRAEALLDPVREIVGHQGGASVWSVKASGKLLARLYAGDGYQLRQRLVPLVGLLNGRAGLPKLWSL.

Belongs to the UreD family. As to quaternary structure, ureD, UreF and UreG form a complex that acts as a GTP-hydrolysis-dependent molecular chaperone, activating the urease apoprotein by helping to assemble the nickel containing metallocenter of UreC. The UreE protein probably delivers the nickel.

The protein resides in the cytoplasm. In terms of biological role, required for maturation of urease via the functional incorporation of the urease nickel metallocenter. This is Urease accessory protein UreD from Mesorhizobium japonicum (strain LMG 29417 / CECT 9101 / MAFF 303099) (Mesorhizobium loti (strain MAFF 303099)).